Here is a 751-residue protein sequence, read N- to C-terminus: Semaphorin-3C (751 aa).

The first 20 residues, 1–20 (MAFRTICVLVGVFICSICVK), serve as a signal peptide directing secretion. The region spanning 28-511 (RVYLTFDELR…SNEGVSQVSL (484 aa)) is the Sema domain. Residue asparagine 81 is glycosylated (N-linked (GlcNAc...) asparagine). Residues cysteine 101 and cysteine 112 are joined by a disulfide bond. N-linked (GlcNAc...) asparagine glycosylation is present at asparagine 123. Cysteine 130 and cysteine 139 are disulfide-bonded. Residues asparagine 252 and asparagine 268 are each glycosylated (N-linked (GlcNAc...) asparagine). Intrachain disulfides connect cysteine 266/cysteine 378 and cysteine 290/cysteine 338. N-linked (GlcNAc...) asparagine glycosylation is present at asparagine 465. Cysteines 514 and 532 form a disulfide. In terms of domain architecture, Ig-like C2-type spans 571–655 (AYRNAAEIVQ…TENSFKQTIA (85 aa)). Residues asparagine 585 and asparagine 586 are each glycosylated (N-linked (GlcNAc...) asparagine). Cysteine 643 and cysteine 709 are oxidised to a cystine. The segment covering 712-731 (TRQQHQQGDESQKMRGDYGK) has biased composition (basic and acidic residues). Residues 712–751 (TRQQHQQGDESQKMRGDYGKLKALINSRKSRNRRNQLPES) form a disordered region.

This sequence belongs to the semaphorin family. As to quaternary structure, interacts with PLXND1. As to expression, expressed intensely in the heart, skeletal muscle, colon, small intestine, ovary, testis, and prostate. Faint expression ubiquitously among other organs, including brain.

The protein resides in the secreted. In terms of biological role, binds to plexin family members and plays an important role in the regulation of developmental processes. Required for normal cardiovascular development during embryogenesis. Functions as attractant for growing axons, and thereby plays an important role in axon growth and axon guidance. In Homo sapiens (Human), this protein is Semaphorin-3C (SEMA3C).